A 59-amino-acid chain; its full sequence is Potassium channel toxin alpha-KTx 4.1 (59 aa).

Residues 1–22 (MKAFYGILIIFILISMIDLSKQ) form the signal peptide. 3 disulfide bridges follow: C29–C50, C35–C55, and C39–C57. An interaction with Ca(2+)-activated K(+) channels region spans residues 48–55 (GKCMNGKC).

Belongs to the short scorpion toxin superfamily. Potassium channel inhibitor family. Alpha-KTx 04 subfamily. As to expression, expressed by the venom gland.

Its subcellular location is the secreted. In terms of biological role, potently blocks Kv1.1/KCNA1 (85%), Kv1.2/KCNA2 (91%), Kv1.3/KCNA3 (89%), Kv1.6/KCNA6 (94%), and Shaker (97%). In Tityus serrulatus (Brazilian scorpion), this protein is Potassium channel toxin alpha-KTx 4.1.